We begin with the raw amino-acid sequence, 255 residues long: 5'-nucleotidase SurE (255 aa).

A divalent metal cation-binding residues include aspartate 8, aspartate 9, serine 39, and asparagine 95.

It belongs to the SurE nucleotidase family. A divalent metal cation is required as a cofactor.

The protein localises to the cytoplasm. It catalyses the reaction a ribonucleoside 5'-phosphate + H2O = a ribonucleoside + phosphate. Nucleotidase that shows phosphatase activity on nucleoside 5'-monophosphates. The polypeptide is 5'-nucleotidase SurE (Herpetosiphon aurantiacus (strain ATCC 23779 / DSM 785 / 114-95)).